The following is a 218-amino-acid chain: Pyridoxine/pyridoxamine 5'-phosphate oxidase (218 aa).

Residues 14–17 (RREY) and K72 contribute to the substrate site. FMN is bound by residues 67–72 (RIVLLK), 82–83 (YT), R88, K89, and Q111. Residues Y129, R133, and S137 each contribute to the substrate site. FMN is bound by residues 146-147 (QS) and W191. 197–199 (RLH) contacts substrate. FMN is bound at residue R201.

The protein belongs to the pyridoxamine 5'-phosphate oxidase family. In terms of assembly, homodimer. It depends on FMN as a cofactor.

It catalyses the reaction pyridoxamine 5'-phosphate + O2 + H2O = pyridoxal 5'-phosphate + H2O2 + NH4(+). It carries out the reaction pyridoxine 5'-phosphate + O2 = pyridoxal 5'-phosphate + H2O2. It participates in cofactor metabolism; pyridoxal 5'-phosphate salvage; pyridoxal 5'-phosphate from pyridoxamine 5'-phosphate: step 1/1. Its pathway is cofactor metabolism; pyridoxal 5'-phosphate salvage; pyridoxal 5'-phosphate from pyridoxine 5'-phosphate: step 1/1. In terms of biological role, catalyzes the oxidation of either pyridoxine 5'-phosphate (PNP) or pyridoxamine 5'-phosphate (PMP) into pyridoxal 5'-phosphate (PLP). The sequence is that of Pyridoxine/pyridoxamine 5'-phosphate oxidase from Escherichia coli (strain SMS-3-5 / SECEC).